Here is a 239-residue protein sequence, read N- to C-terminus: Phosducin-like protein 3 (239 aa).

The residue at position 1 (methionine 1) is an N-acetylmethionine. The Phosducin domain occupies 32-180; that stretch reads EAEEEQRILQ…EGDIKAQFIG (149 aa). Serine 43 bears the Phosphoserine mark. The thioredoxin fold stretch occupies residues 91 to 239; it reads FGEVLEISGK…MKRDSDSEGD (149 aa). 2 interaction with XIAP regions span residues 97-99 and 153-155; these read ISG and TCI. Residues serine 234 and serine 236 each carry the phosphoserine modification.

It belongs to the phosducin family. In terms of assembly, interacts (via thioredoxin fold region) with KDR/VEGFR2 (via juxtamembrane domain). Forms ternary complexes with the chaperonin CCT complex and actin substrate, leading to inhibition of actin folding. Interacts with XIAP (via BIR 3 and RING domain). Interacts with HSP90AA1 and HSP90AB1. N-terminal methionine acetylation destabilizes the protein. In terms of tissue distribution, expressed in endothelial cells (at protein level). Expressed in all tissues examined including spleen, thymus, prostate, testis, ovary, small intestine and colon.

Its subcellular location is the cytoplasm. It localises to the perinuclear region. It is found in the endoplasmic reticulum. Its function is as follows. Acts as a chaperone for the angiogenic VEGF receptor KDR/VEGFR2, increasing its abundance by inhibiting its ubiquitination and degradation. Inhibits the folding activity of the chaperonin-containing T-complex (CCT) which leads to inhibition of cytoskeletal actin folding. Acts as a chaperone during heat shock alongside HSP90 and HSP40/70 chaperone complexes. Modulates the activation of caspases during apoptosis. The sequence is that of Phosducin-like protein 3 (PDCL3) from Homo sapiens (Human).